The following is a 269-amino-acid chain: UPF0328 protein ECU03_0020 (269 aa).

It belongs to the UPF0328 family.

The sequence is that of UPF0328 protein ECU03_0020 from Encephalitozoon cuniculi (strain GB-M1) (Microsporidian parasite).